A 111-amino-acid polypeptide reads, in one-letter code: Propane 2-monooxygenase, effector component (111 aa).

This sequence belongs to the TmoD/XamoD family. As to quaternary structure, the propane 2-monooxygenase multicomponent enzyme system is composed of an electron transfer component and a monooxygenase component interacting with the effector protein PrmD. The electron transfer component is composed of a reductase (PrmB), and the monooxygenase component is formed by a large subunit (PrmA) and a small subunit (PrmC).

Functionally, effector component of the propane 2-monooxygenase multicomponent enzyme system which is involved in the degradation of propane via the O2-dependent hydroxylation of propane. This chain is Propane 2-monooxygenase, effector component, found in Gordonia sp. (strain TY-5).